The sequence spans 130 residues: Small ribosomal subunit protein uS11 (130 aa).

The span at 1–15 (MARPTKKSGPRKQKR) shows a compositional bias: basic residues. Residues 1–21 (MARPTKKSGPRKQKRNVPSGV) form a disordered region.

Belongs to the universal ribosomal protein uS11 family. Part of the 30S ribosomal subunit. Interacts with proteins S7 and S18. Binds to IF-3.

Its function is as follows. Located on the platform of the 30S subunit, it bridges several disparate RNA helices of the 16S rRNA. Forms part of the Shine-Dalgarno cleft in the 70S ribosome. The sequence is that of Small ribosomal subunit protein uS11 from Synechococcus elongatus (strain ATCC 33912 / PCC 7942 / FACHB-805) (Anacystis nidulans R2).